We begin with the raw amino-acid sequence, 156 residues long: Small ribosomal subunit protein uS7 (156 aa).

This sequence belongs to the universal ribosomal protein uS7 family. Part of the 30S ribosomal subunit. Contacts proteins S9 and S11.

Functionally, one of the primary rRNA binding proteins, it binds directly to 16S rRNA where it nucleates assembly of the head domain of the 30S subunit. Is located at the subunit interface close to the decoding center, probably blocks exit of the E-site tRNA. The protein is Small ribosomal subunit protein uS7 of Paramagnetospirillum magneticum (strain ATCC 700264 / AMB-1) (Magnetospirillum magneticum).